The sequence spans 213 residues: Large ribosomal subunit protein uL23 (213 aa).

The tract at residues 1-117 (MNHNEIIKYP…KSTSELKLEE (117 aa)) is large ribosomal subunit protein uL23. A unknown region spans residues 118–213 (KIAAKIAAKE…TTKKTTTKKV (96 aa)).

Belongs to the universal ribosomal protein uL23 family. As to quaternary structure, part of the 50S ribosomal subunit. Contacts protein L29, and trigger factor when it is bound to the ribosome.

Its function is as follows. One of the early assembly proteins it binds 23S rRNA. One of the proteins that surrounds the polypeptide exit tunnel on the outside of the ribosome. Forms the main docking site for trigger factor binding to the ribosome. The polypeptide is Large ribosomal subunit protein uL23 (Mycoplasma mobile (strain ATCC 43663 / 163K / NCTC 11711) (Mesomycoplasma mobile)).